Consider the following 327-residue polypeptide: MSHLADLVERALAAINDAQDVAALDNVRVEYLGKKGHLTLQMTTLRELPAEERPAAGAVINEAKQQVQDALNAQKNALESAVMNARLAQETIDVSLPGRRIENGGLHPVTRTIDRIETFFGELGFSVETGPEIEDDYHNFDALNIPAHHPARADHDTFWFDATRLLRTQTSGVQIRTMKNQQPPIRVIAPGRVYRNDYDQTHTPMFHQMEGLIVDKNISFTNLKGTLHDFLNNFFEDDMQVRFRPSYFPFTEPSAEVDVMGKNGKWLEVLGCGMVHPNVLSNAGIDPEVYSGFAFGMGMERLTMLRYGVTDLRAFFENDLRFLKQFK.

E252 contacts Mg(2+).

This sequence belongs to the class-II aminoacyl-tRNA synthetase family. Phe-tRNA synthetase alpha subunit type 1 subfamily. In terms of assembly, tetramer of two alpha and two beta subunits. It depends on Mg(2+) as a cofactor.

The protein localises to the cytoplasm. It carries out the reaction tRNA(Phe) + L-phenylalanine + ATP = L-phenylalanyl-tRNA(Phe) + AMP + diphosphate + H(+). The polypeptide is Phenylalanine--tRNA ligase alpha subunit (Erwinia tasmaniensis (strain DSM 17950 / CFBP 7177 / CIP 109463 / NCPPB 4357 / Et1/99)).